Reading from the N-terminus, the 3579-residue chain is Protocadherin-like wing polarity protein stan (3579 aa).

The N-terminal stretch at 1-29 (MQTREFPQRPLGLLLVLLVVLLQSSLIKS) is a signal peptide. The Extracellular portion of the chain corresponds to 30 to 2816 (YLIIVHEDTP…EPSLLVQITS (2787 aa)). 3 N-linked (GlcNAc...) asparagine glycosylation sites follow: asparagine 46, asparagine 179, and asparagine 340. Cadherin domains follow at residues 360 to 464 (EQAL…SPTF), 465 to 581 (EAEQ…YPQF), 582 to 689 (SERT…APRF), 690 to 794 (YTSQ…DPAF), 795 to 897 (NPKY…APIF), 898 to 1007 (ENAP…APAF), 1008 to 1113 (KSPL…PPTF), and 1114 to 1220 (ASDK…APVL). An N-linked (GlcNAc...) asparagine glycan is attached at asparagine 671. A glycan (N-linked (GlcNAc...) asparagine) is linked at asparagine 886. Residues asparagine 1269, asparagine 1374, and asparagine 1441 are each glycosylated (N-linked (GlcNAc...) asparagine). In terms of domain architecture, EGF-like 1; calcium-binding spans 1482–1518 (EVDLCYSDPCQNGGTCVRREGGYTCVCPSTHTGQNCE). Intrachain disulfides connect cysteine 1486–cysteine 1497, cysteine 1491–cysteine 1506, and cysteine 1508–cysteine 1517. Residues 1556 to 1753 (LRARAFGRNS…VADNGTLAGC (198 aa)) enclose the Laminin G-like 1 domain. N-linked (GlcNAc...) asparagine glycosylation is found at asparagine 1650, asparagine 1678, and asparagine 1747. 4 disulfide bridges follow: cysteine 1727/cysteine 1753, cysteine 1760/cysteine 1771, cysteine 1765/cysteine 1780, and cysteine 1782/cysteine 1791. An EGF-like 2; calcium-binding domain is found at 1756 to 1792 (KAPLCQSEPCFNGGTCREGWGTYSCECPEGYAGNSCQ). The 168-residue stretch at 1796-1963 (PAPWRFSGDG…TIRENVEDGC (168 aa)) folds into the Laminin G-like 2 domain. Residue asparagine 1843 is glycosylated (N-linked (GlcNAc...) asparagine). 4 disulfides stabilise this stretch: cysteine 1937–cysteine 1963, cysteine 1969–cysteine 1979, cysteine 1973–cysteine 1988, and cysteine 1990–cysteine 1999. The region spanning 1965–2000 (SRAQCPDHCPNHSSCQSSWDLSTCECDSGYVGTDCA) is the EGF-like 3; calcium-binding domain. Residue asparagine 1975 is glycosylated (N-linked (GlcNAc...) asparagine). N-linked (GlcNAc...) asparagine glycans are attached at residues asparagine 2016, asparagine 2028, asparagine 2071, and asparagine 2088. Intrachain disulfides connect cysteine 2092–cysteine 2095, cysteine 2097–cysteine 2114, cysteine 2116–cysteine 2125, and cysteine 2128–cysteine 2140. In terms of domain architecture, Laminin EGF-like spans 2095-2142 (CDCYSIGSFSGACNPLTGQCECREGVIGRRCDSCSNPYAEVTLSGCEV). Residues asparagine 2196 and asparagine 2320 are each glycosylated (N-linked (GlcNAc...) asparagine). Basic and acidic residues predominate over residues 2553–2562 (QETQRLEIPS). Disordered stretches follow at residues 2553–2582 (QETQ…STEQ), 2610–2635 (HEIP…EREP), and 2654–2684 (VISP…GENE). Residues 2567 to 2579 (SSSSPSSSSSSGS) show a composition bias toward low complexity. Residues 2653–2803 (EVISPDSPEM…AVIVDVIDPE (151 aa)) form the GAIN-B domain. Disulfide bonds link cysteine 2747/cysteine 2785 and cysteine 2762/cysteine 2787. The GPS stretch occupies residues 2747–2803 (CVRWNSFTNQWTRLGCQTEIPDFDGDFNPAAQQAILVNCSCTHISSYAVIVDVIDPE). Asparagine 2784 carries N-linked (GlcNAc...) asparagine glycosylation. A helical membrane pass occupies residues 2817–2837 (YSAFLVSLPLLLGVLLALALL). Over 2838–2845 (RGQQTNSN) the chain is Cytoplasmic. Residues 2846-2866 (TIHQNIVLCVFCAELLFFVGM) traverse the membrane as a helical segment. The Extracellular portion of the chain corresponds to 2867-2883 (QSRRQLLESEFPCKLTA). The helical transmembrane segment at 2884–2904 (ICLHYFWLAAFAWTTVDCVHL) threads the bilayer. At 2905–2919 (YRMLTEMRDINHGPM) the chain is on the cytoplasmic side. A helical membrane pass occupies residues 2920–2940 (GFYFAMGYGAPAIVVGLSVGV). Residues 2941-2959 (RAHEYGNSLFCWLSVYEPV) lie on the Extracellular side of the membrane. Residues 2960–2980 (VWWLVGPIAGMSVVNLLILFV) traverse the membrane as a helical segment. The Cytoplasmic segment spans residues 2981–3000 (SVKAAFTLKDHVLGFGNLRT). A helical transmembrane segment spans residues 3001–3021 (LLWLSVVSLPLMGVMWVLAVL). Over 3022–3031 (AASEHSQLLS) the chain is Extracellular. A helical transmembrane segment spans residues 3032–3052 (LLLSGVVLLHALFCLIGYCII). The Cytoplasmic segment spans residues 3053-3579 (NKRVRENLQR…RNIDDDETTV (527 aa)). Disordered regions lie at residues 3111–3225 (GISA…TPAY), 3343–3377 (LYGR…SGSQ), 3458–3486 (YHQQ…YHFP), and 3499–3579 (LSHT…ETTV). Residues 3113 to 3128 (SASSTTSRSTAKTSSS) are compositionally biased toward low complexity. A compositionally biased stretch (basic and acidic residues) spans 3167–3191 (RGGEEKPSRRQRKDSDSGSETDGRS). 2 positions are modified to phosphoserine: serine 3199 and serine 3200. Polar residues predominate over residues 3208-3223 (ARSSGTHRSTAVSSTP). Over residues 3343–3352 (LYGRRGEYPD) the composition is skewed to basic and acidic residues. Low complexity predominate over residues 3459–3468 (HQQQQQQQQH). A compositionally biased stretch (basic and acidic residues) spans 3469 to 3482 (HLQDRLSEGSDKNG). The segment covering 3501 to 3513 (HTQPPSLHGSQLM) has biased composition (polar residues).

Belongs to the G-protein coupled receptor 2 family. As to quaternary structure, interacts with ATP6AP2 (via N-terminus). In terms of tissue distribution, in the pupal wing, expressed at relatively even levels in all regions. Abundant in 6-9 hours embryos. Expressed at higher levels in pupae than larvae.

Its subcellular location is the cell membrane. It is found in the apical cell membrane. Functionally, involved in the fz signaling pathway that controls wing tissue polarity. Also mediates homophilic cell adhesion. May play a role in initiating prehair morphogenesis. May play a critical role in tissue polarity and in formation of normal dendrite fields. During planar cell polarity, stabilizes asymmetric PCP domains together with ATP6AP2. The sequence is that of Protocadherin-like wing polarity protein stan (stan) from Drosophila melanogaster (Fruit fly).